The primary structure comprises 228 residues: MPVIDLATTPLREFNRSLHNIQQGSNDLSYEVANPRGSHAVAVGIDGPVVVDVNGSVGYYCAGMNDGGTVTVHGSAGPGVAENMMSGKVVIEGDASQYAGATGRGGLLVIKGNAASRCGISMKGIDIVVHGNIGHMSAFMGQSGHLVVLGDAGDALGDSLYEAKLFVRGTVKSLGADCIEKEMRPEHLQKLAELLEKADVKDVRPEEFKRYGSARKLYNFNIDNADAY.

Belongs to the FwdC/FmdC family.

The polypeptide is Protein GlxC (glxC) (Rhizobium meliloti (strain 1021) (Ensifer meliloti)).